A 44-amino-acid polypeptide reads, in one-letter code: Small, acid-soluble spore protein N (44 aa).

Positions 1-44 (MGNPKKNSKDFAPNHIGTQSKKAGGNKGKQMQDQTGKQPIVDNG) are disordered.

Belongs to the SspN family.

Its subcellular location is the spore core. The sequence is that of Small, acid-soluble spore protein N from Bacillus anthracis (strain A0248).